A 399-amino-acid chain; its full sequence is Protein DDI1 homolog 2 (399 aa).

The Ubiquitin-like domain occupies 1–81 (MLLTVYCVRR…VILRQKENAD (81 aa)). The disordered stretch occupies residues 99-134 (IAVPGTSNPQQRQLPRTQAQHSSPGEMASSPQGLDN). Over residues 103-131 (GTSNPQQRQLPRTQAQHSSPGEMASSPQG) the composition is skewed to polar residues. At Thr-104 the chain carries Phosphothreonine. Phosphoserine is present on residues Ser-121, Ser-128, Ser-150, and Ser-194. Asp-252 is an active-site residue. Positions 376–395 (EEIADQELAEAIQKSAEDAE) match the Ubiquitin-binding motif.

This sequence belongs to the DDI1 family. Homodimer.

The protein resides in the cytoplasm. Its subcellular location is the cytosol. It localises to the chromosome. Its function is as follows. Aspartic protease that mediates the cleavage of NFE2L1/NRF1 at 'Leu-104', thereby promoting release of NFE2L1/NRF1 from the endoplasmic reticulum membrane. Ubiquitination of NFE2L1/NRF1 is a prerequisite for cleavage, suggesting that DDI2 specifically recognizes and binds ubiquitinated NFE2L1/NRF1. Seems to act as a proteasomal shuttle which links the proteasome and replication fork proteins like RTF2. Required, with DDI1, for cellular survival following replication stress. Together or redudantly with DDI1, removes RTF2 from stalled forks to allow cell cycle progression after replication stress and maintains genome integrity. The sequence is that of Protein DDI1 homolog 2 from Mus musculus (Mouse).